The following is a 423-amino-acid chain: Putative galacturan 1,4-alpha-galacturonidase C (423 aa).

Positions 1–20 (MQLRASVLLSFLGLASVGHA) are cleaved as a signal peptide. Asparagine 92, asparagine 98, asparagine 118, asparagine 156, asparagine 179, and asparagine 191 each carry an N-linked (GlcNAc...) asparagine glycan. PbH1 repeat units lie at residues 215 to 236 (ATNI…AIKP) and 238 to 258 (SYNI…AIGS). The active-site Proton donor is the aspartate 229. Cysteine 231 and cysteine 248 are disulfide-bonded. Asparagine 245, asparagine 344, and asparagine 362 each carry an N-linked (GlcNAc...) asparagine glycan. A disulfide bridge links cysteine 379 with cysteine 385. An N-linked (GlcNAc...) asparagine glycan is attached at asparagine 400.

This sequence belongs to the glycosyl hydrolase 28 family.

The protein resides in the secreted. The catalysed reaction is [(1-&gt;4)-alpha-D-galacturonosyl](n) + H2O = alpha-D-galacturonate + [(1-&gt;4)-alpha-D-galacturonosyl](n-1). Its function is as follows. Specific in hydrolyzing the terminal glycosidic bond of polygalacturonic acid and oligogalacturonates. The chain is Putative galacturan 1,4-alpha-galacturonidase C (rgxC) from Aspergillus niger (strain ATCC MYA-4892 / CBS 513.88 / FGSC A1513).